The chain runs to 236 residues: NEP1-interacting protein 1 (236 aa).

The Lumenal, thylakoid segment spans residues 1 to 44; that stretch reads MASSRFQSGFCPISSCPSLENFIERIKDACRFTLSAVLGTILSA. Residues 45–65 form a helical membrane-spanning segment; that stretch reads VLTFFFALVGTLLGALTGALI. Topologically, residues 66–78 are stromal; that stretch reads GQETESGFIRGAA. Residues 79-99 traverse the membrane as a helical segment; it reads VGAISGAVFSIEVFESSLVLW. The Lumenal, thylakoid portion of the chain corresponds to 100-104; that stretch reads KSNES. The helical transmembrane segment at 105 to 125 threads the bilayer; the sequence is RFGCLLYLIDVIVSLISGRLV. Residues 126–236 are Stromal-facing; the sequence is RERIGPAMLS…GSCPMCRRDL (111 aa). The segment at 191-233 adopts an RING-type; atypical zinc-finger fold; it reads CSVCLQDFQLGETVRSLPHCHHMFHLPCIDNWLFRHGSCPMCR.

It belongs to the RING-type zinc finger family. NIP subfamily. In terms of assembly, interacts with RPOT2.

Its subcellular location is the plastid. The protein localises to the chloroplast thylakoid membrane. In terms of biological role, intrinsic thylakoid membrane protein that fixes RPOT2 on the stromal side of the thylakoid membrane. The chain is NEP1-interacting protein 1 (NIP1) from Arabidopsis thaliana (Mouse-ear cress).